The sequence spans 410 residues: Multifunctional CCA protein (410 aa).

Gly8 and Arg11 together coordinate ATP. Residues Gly8 and Arg11 each contribute to the CTP site. Residues Asp21 and Asp23 each coordinate Mg(2+). Positions 91, 143, and 146 each coordinate ATP. 3 residues coordinate CTP: Arg91, Arg143, and Arg146. The region spanning 232-333 (TGVHVMMVVD…VRLLERSDAI (102 aa)) is the HD domain.

This sequence belongs to the tRNA nucleotidyltransferase/poly(A) polymerase family. Bacterial CCA-adding enzyme type 1 subfamily. In terms of assembly, monomer. Can also form homodimers and oligomers. Requires Mg(2+) as cofactor. Ni(2+) is required as a cofactor.

It catalyses the reaction a tRNA precursor + 2 CTP + ATP = a tRNA with a 3' CCA end + 3 diphosphate. It carries out the reaction a tRNA with a 3' CCA end + 2 CTP + ATP = a tRNA with a 3' CCACCA end + 3 diphosphate. In terms of biological role, catalyzes the addition and repair of the essential 3'-terminal CCA sequence in tRNAs without using a nucleic acid template. Adds these three nucleotides in the order of C, C, and A to the tRNA nucleotide-73, using CTP and ATP as substrates and producing inorganic pyrophosphate. tRNA 3'-terminal CCA addition is required both for tRNA processing and repair. Also involved in tRNA surveillance by mediating tandem CCA addition to generate a CCACCA at the 3' terminus of unstable tRNAs. While stable tRNAs receive only 3'-terminal CCA, unstable tRNAs are marked with CCACCA and rapidly degraded. The polypeptide is Multifunctional CCA protein (Paraburkholderia phytofirmans (strain DSM 17436 / LMG 22146 / PsJN) (Burkholderia phytofirmans)).